A 93-amino-acid polypeptide reads, in one-letter code: CRISPR-associated endoribonuclease Cas2 1 (93 aa).

D8 provides a ligand contact to Mg(2+).

This sequence belongs to the CRISPR-associated endoribonuclease Cas2 protein family. Homodimer, forms a heterotetramer with a Cas1 homodimer. It depends on Mg(2+) as a cofactor.

In terms of biological role, CRISPR (clustered regularly interspaced short palindromic repeat), is an adaptive immune system that provides protection against mobile genetic elements (viruses, transposable elements and conjugative plasmids). CRISPR clusters contain sequences complementary to antecedent mobile elements and target invading nucleic acids. CRISPR clusters are transcribed and processed into CRISPR RNA (crRNA). Functions as a ssRNA-specific endoribonuclease. Involved in the integration of spacer DNA into the CRISPR cassette. In Chloroflexus aurantiacus (strain ATCC 29366 / DSM 635 / J-10-fl), this protein is CRISPR-associated endoribonuclease Cas2 1.